The primary structure comprises 357 residues: MQNTAPVPTTTTASKMQPFNNSLFGSFDDPILNARAAQVALADIDVKNVPQLTNPLMRPHDMFSYSNYFSGIHDTSAATNIYQGLPSSSEPFDASVVVPTSSDDQMTPLQQVMAMQQSYGAPPPFQYNMTHPFSTTSIASSNNLARYPIAPPTSDMDTDPRQLETFAEHFKQRRIKLGVTQADVGKALAHLKMPGVGSLSQSTICRFESLTLSHNNMVALKPILHSWLEKAEEAMKQKDTIGDINGILPNTDKKRKRTSIAAPEKRELEQFFKQQPRPSGERIASIADRLDLKKNVVRVWFCNQRQKQKRDFRSQFRARSAAAVMGPRVMPVLNGNNSNNNLKQGQTTYNGLPGFFD.

The POU-IV box motif lies at R35–I44. The POU-specific domain occupies D155–E232. Residues K253–F312 constitute a DNA-binding region (homeobox).

It belongs to the POU transcription factor family. Class-4 subfamily. Interacts with mec-3; the heterooligomer binds to the promoters of mec-3, mec-4 and mec-7. In terms of tissue distribution, specific to neurons and neuroblasts. Expressed in CEM head neurons and in IL2, URA, URB, URX and URY neurons. Not expressed in olfactory sensory neurons but expressed in AIZ interneurons.

It is found in the nucleus. In terms of biological role, transcription factor required for correct cell fate determination and differentiation in diverse neuronal cell lineages where it plays a role in specifying the fate of daughter cells during cell divisions. Involved in sensory neuron production and function. Binds both alone and with mec-3 to the mec-3 promoter to initiate and maintain mec-3 expression which is required for sensory neuron differentiation. In addition, binds both alone and with mec-3 to the promoters of mec-4 and mec-7 which act to regulate sensory neuron function. Involved in determining the identity of the serotonergic NSM neurons and the cholinergic IL2 sensory and URA motor neurons. Promotes expression of the cfi-1 transcription factor in the URA and IL2 neurons which in turn activates normal URA and IL2 gene expression. Required to determine the identity of BDU sensory neurons in concert with transcription factor unc-86, regulating expression of a number of genes, including transcription factors ceh-14 and ahr-1, neuropeptides flp-10, nlp-1 and nlp-15, and tyramine receptor-encoding ser-2. Regulates expression of a number of genes in NSM neurons including bas-1, cat-1, dop-3, mgl-3, nlp-13, scd-2 and ptps-1. In the IL2 neurons, required for expression of cho-1, gcy-19, klp-6, lag-2, unc-5 and unc-17. Promotes expression of pkd-2 in the male-specific CEM head neurons. Required for dauer-specific branching of IL2Q neurons and nictation behavior. Controls both the timing and direction of axon outgrowth in HSN neurons. Plays a role in serotonin production by regulating expression of the tryptophan hydrolase tph-1 which catalyzes serotonin synthesis, in the AIM, NSM, HSN and RIH neurons. Involved in regulation of lin-11 expression in the AIZ interneurons, the major interneurons of the olfactory pathway, and is required for odortaxis behavior. Involved in neurite pruning between AIM neurons during larval development by regulating the expression of transcription factor mbr-1. Required for correct localization of unc-40. The protein is Transcription factor unc-86 (unc-86) of Caenorhabditis elegans.